The chain runs to 445 residues: tRNA-2-methylthio-N(6)-dimethylallyladenosine synthase (445 aa).

One can recognise an MTTase N-terminal domain in the interval 4–121; that stretch reads NKIYIKTWGC…LPNMIQEVKK (118 aa). [4Fe-4S] cluster contacts are provided by cysteine 13, cysteine 50, cysteine 84, cysteine 158, cysteine 162, and cysteine 165. A Radical SAM core domain is found at 144–376; the sequence is RKPKVTAFVS…QTLIRNNTTM (233 aa). Residues 379–442 form the TRAM domain; the sequence is QKMLGSIQSV…PNSLRGSYEK (64 aa).

The protein belongs to the methylthiotransferase family. MiaB subfamily. Monomer. [4Fe-4S] cluster is required as a cofactor.

Its subcellular location is the cytoplasm. The catalysed reaction is N(6)-dimethylallyladenosine(37) in tRNA + (sulfur carrier)-SH + AH2 + 2 S-adenosyl-L-methionine = 2-methylsulfanyl-N(6)-dimethylallyladenosine(37) in tRNA + (sulfur carrier)-H + 5'-deoxyadenosine + L-methionine + A + S-adenosyl-L-homocysteine + 2 H(+). Its function is as follows. Catalyzes the methylthiolation of N6-(dimethylallyl)adenosine (i(6)A), leading to the formation of 2-methylthio-N6-(dimethylallyl)adenosine (ms(2)i(6)A) at position 37 in tRNAs that read codons beginning with uridine. This chain is tRNA-2-methylthio-N(6)-dimethylallyladenosine synthase, found in Buchnera aphidicola subsp. Baizongia pistaciae (strain Bp).